Reading from the N-terminus, the 381-residue chain is Protein RecA (381 aa).

79-86 (GPESSGKT) is an ATP binding site.

It belongs to the RecA family.

It localises to the cytoplasm. In terms of biological role, can catalyze the hydrolysis of ATP in the presence of single-stranded DNA, the ATP-dependent uptake of single-stranded DNA by duplex DNA, and the ATP-dependent hybridization of homologous single-stranded DNAs. It interacts with LexA causing its activation and leading to its autocatalytic cleavage. This chain is Protein RecA, found in Streptococcus parasanguinis.